Here is a 418-residue protein sequence, read N- to C-terminus: AA14 family lytic polysaccharide monooxygenase B (418 aa).

Positions 1–18 are cleaved as a signal peptide; it reads MIPVFLAAVAAFLPLTSG. N-linked (GlcNAc...) asparagine glycosylation is found at asparagine 31, asparagine 94, and asparagine 151. 4 disulfide bridges follow: cysteine 85/cysteine 108, cysteine 127/cysteine 154, cysteine 171/cysteine 176, and cysteine 178/cysteine 200. N-linked (GlcNAc...) asparagine glycans are attached at residues asparagine 201 and asparagine 235. A disulfide bond links cysteine 220 and cysteine 236. Positions 307–343 are enriched in low complexity; it reads AAATPAPSSSGSSPSSSSPGSSSTASTTSTSGPRPSA. The disordered stretch occupies residues 307 to 364; sequence AAATPAPSSSGSSPSSSSPGSSSTASTTSTSGPRPSARGFRRSTGERPPTGVPTPRKS.

It belongs to the polysaccharide monooxygenase AA14 family. It depends on Cu(2+) as a cofactor.

It is found in the secreted. Lytic polysaccharide monooxygenase (LPMO) that oxidatively cleaves xylan with both C1 and C4 regioselectivity and that specifically targets the protective shield made by heteroxylans that cover cellulose microfibrils in wood. Catalysis by LPMOs requires the reduction of the active-site copper from Cu(II) to Cu(I) by a reducing agent and H(2)O(2) or O(2) as a cosubstrate. Cleavage occurs only when xylans are bound to cellulose and not when they are in solution. Increases the efficiency of wood saccharification through oxidative cleavage of highly refractory xylan-coated cellulose fibers via synergistic relationship with xylan-active enzymes, xylobiohydrolases and cellobiohydrolases. The protein is AA14 family lytic polysaccharide monooxygenase B of Trametes coccinea (strain BRFM310) (Pycnoporus coccineus).